The following is a 251-amino-acid chain: uncharacterized protein (251 aa).

The 226-residue stretch at 21–246 (KGSSPFAFYA…ITYEEFNKQL (226 aa)) folds into the AMMECR1 domain.

This is an uncharacterized protein from Saccharomyces cerevisiae (strain ATCC 204508 / S288c) (Baker's yeast).